The primary structure comprises 166 residues: Urease accessory protein UreE 2 (166 aa).

The interval 133-156 (QPEHGAYGGGHHHSRAGEEDFNYP) is disordered.

The protein belongs to the UreE family.

It is found in the cytoplasm. In terms of biological role, involved in urease metallocenter assembly. Binds nickel. Probably functions as a nickel donor during metallocenter assembly. This Pseudomonas syringae pv. tomato (strain ATCC BAA-871 / DC3000) protein is Urease accessory protein UreE 2.